The following is a 245-amino-acid chain: 1-(5-phosphoribosyl)-5-[(5-phosphoribosylamino)methylideneamino] imidazole-4-carboxamide isomerase (245 aa).

Asp7 functions as the Proton acceptor in the catalytic mechanism. Residue Asp129 is the Proton donor of the active site.

It belongs to the HisA/HisF family.

Its subcellular location is the cytoplasm. The catalysed reaction is 1-(5-phospho-beta-D-ribosyl)-5-[(5-phospho-beta-D-ribosylamino)methylideneamino]imidazole-4-carboxamide = 5-[(5-phospho-1-deoxy-D-ribulos-1-ylimino)methylamino]-1-(5-phospho-beta-D-ribosyl)imidazole-4-carboxamide. The protein operates within amino-acid biosynthesis; L-histidine biosynthesis; L-histidine from 5-phospho-alpha-D-ribose 1-diphosphate: step 4/9. This chain is 1-(5-phosphoribosyl)-5-[(5-phosphoribosylamino)methylideneamino] imidazole-4-carboxamide isomerase, found in Salmonella choleraesuis (strain SC-B67).